The sequence spans 148 residues: Urease accessory protein UreE (148 aa).

Belongs to the UreE family.

Its subcellular location is the cytoplasm. Involved in urease metallocenter assembly. Binds nickel. Probably functions as a nickel donor during metallocenter assembly. The chain is Urease accessory protein UreE from Lysinibacillus sphaericus (strain C3-41).